The sequence spans 401 residues: Riboflavin biosynthesis protein RibBA (401 aa).

The tract at residues 1 to 203 (MTDFQFSKVE…IQQLQEYRRK (203 aa)) is DHBP synthase. D-ribulose 5-phosphate contacts are provided by residues 30 to 31 (RE), D35, 142 to 146 (RNGHT), and E166. E31 contacts Mg(2+). H145 provides a ligand contact to Mg(2+). Residues 204-401 (HDSLVKQISV…QIKMGHMFNF (198 aa)) form a GTP cyclohydrolase II region. GTP is bound at residue 254–258 (RIHSE). Zn(2+)-binding residues include C259, C270, and C272. Residues Q275, 297 to 299 (EGR), and T319 each bind GTP. Catalysis depends on D331, which acts as the Proton acceptor; for GTP cyclohydrolase activity. The Nucleophile; for GTP cyclohydrolase activity role is filled by R333. Residues T354 and K359 each coordinate GTP.

The protein in the N-terminal section; belongs to the DHBP synthase family. In the C-terminal section; belongs to the GTP cyclohydrolase II family. Requires Mg(2+) as cofactor. Mn(2+) is required as a cofactor. It depends on Zn(2+) as a cofactor.

The catalysed reaction is D-ribulose 5-phosphate = (2S)-2-hydroxy-3-oxobutyl phosphate + formate + H(+). It carries out the reaction GTP + 4 H2O = 2,5-diamino-6-hydroxy-4-(5-phosphoribosylamino)-pyrimidine + formate + 2 phosphate + 3 H(+). It participates in cofactor biosynthesis; riboflavin biosynthesis; 2-hydroxy-3-oxobutyl phosphate from D-ribulose 5-phosphate: step 1/1. It functions in the pathway cofactor biosynthesis; riboflavin biosynthesis; 5-amino-6-(D-ribitylamino)uracil from GTP: step 1/4. Catalyzes the conversion of D-ribulose 5-phosphate to formate and 3,4-dihydroxy-2-butanone 4-phosphate. In terms of biological role, catalyzes the conversion of GTP to 2,5-diamino-6-ribosylamino-4(3H)-pyrimidinone 5'-phosphate (DARP), formate and pyrophosphate. The polypeptide is Riboflavin biosynthesis protein RibBA (Actinobacillus pleuropneumoniae serotype 7 (strain AP76)).